The chain runs to 872 residues: Homeobox-leucine zipper protein ROC6 (872 aa).

2 disordered regions span residues 28–53 (VHNSRLLPTPPVPKPGGGFAAPGLSL) and 67–130 (NRSL…HRHT). Gly residues predominate over residues 74-85 (GNGGSGSGGDGD). Residues 86-99 (SLGRGREEENDSRS) are compositionally biased toward basic and acidic residues. Basic residues predominate over residues 119 to 130 (PRKKKKRYHRHT). Residues 122–181 (KKKRYHRHTPQQIQELEAVFKECPHPDEKQRMELSRRLNLESRQVKFWFQNRRTQMKQTQ) constitute a DNA-binding region (homeobox). A coiled-coil region spans residues 176–248 (QMKQTQIERH…LKDELDRVCA (73 aa)). In terms of domain architecture, START spans 340-583 (GAIDRAVLLE…LQRQCQYLAI (244 aa)). The disordered stretch occupies residues 792–818 (HNNGASPSPAEVGSGASPNSAAGGGGG).

The protein belongs to the HD-ZIP homeobox family. Class IV subfamily.

The protein localises to the nucleus. Its function is as follows. Probable transcription factor. In Oryza sativa subsp. japonica (Rice), this protein is Homeobox-leucine zipper protein ROC6 (ROC6).